Reading from the N-terminus, the 215-residue chain is Outer membrane protein assembly factor BamC homolog (215 aa).

An N-terminal signal peptide occupies residues 1–16 (MKKIILNLVTAIILAG). The N-palmitoyl cysteine moiety is linked to residue C17. C17 is lipidated: S-diacylglycerol cysteine.

This sequence belongs to the BamC family.

The protein resides in the cell outer membrane. The sequence is that of Outer membrane protein assembly factor BamC homolog from Haemophilus influenzae (strain ATCC 51907 / DSM 11121 / KW20 / Rd).